The sequence spans 143 residues: UPF0102 protein Acid345_3985 (143 aa).

Belongs to the UPF0102 family.

This Koribacter versatilis (strain Ellin345) protein is UPF0102 protein Acid345_3985.